The sequence spans 260 residues: Sphinganine C4-monooxygenase 1 (260 aa).

The next 3 membrane-spanning stretches (helical) occupy residues 11–31 (LLGT…YVAL), 55–75 (SVVK…ILLF), and 92–112 (FLVL…WQYF). Positions 99 to 235 (FVTAMIVLDT…FVMWDRILGT (137 aa)) constitute a Fatty acid hydroxylase domain. Positions 114–118 (HRYMH) match the Histidine box-1 motif. A Histidine box-2 motif is present at residues 128–132 (HSQHH). The Histidine box-3 motif lies at 207–213 (YHDIHHQ).

Belongs to the sterol desaturase family. The cofactor is Fe cation. As to expression, ubiquitous, with higher levels in flowers and roots.

Its subcellular location is the endoplasmic reticulum membrane. The catalysed reaction is a dihydroceramide + 2 Fe(II)-[cytochrome b5] + O2 + 2 H(+) = a phytoceramide + 2 Fe(III)-[cytochrome b5] + H2O. It participates in membrane lipid metabolism; sphingolipid biosynthesis. Involved in sphingolipid trihydroxy long-chain base (4-hydroxysphinganine) biosynthesis. Can use C18- and C20-sphinganine as substrates to produce C18- and C20-phytosphinganines (D-ribo-2-amino-1,3,4-trihydroxyoctadecane and -eicosane). The protein is Sphinganine C4-monooxygenase 1 (SBH1) of Arabidopsis thaliana (Mouse-ear cress).